We begin with the raw amino-acid sequence, 566 residues long: Urease subunit alpha (566 aa).

Positions 128–566 (GGIDTHIHFI…LPMAQRYFLF (439 aa)) constitute a Urease domain. Ni(2+)-binding residues include His-133, His-135, and Lys-216. The residue at position 216 (Lys-216) is an N6-carboxylysine. His-218 contributes to the substrate binding site. His-245 and His-271 together coordinate Ni(2+). The Proton donor role is filled by His-319. Ni(2+) is bound at residue Asp-359.

The protein belongs to the metallo-dependent hydrolases superfamily. Urease alpha subunit family. Heterotrimer of UreA (gamma), UreB (beta) and UreC (alpha) subunits. Three heterotrimers associate to form the active enzyme. Ni cation serves as cofactor. Carboxylation allows a single lysine to coordinate two nickel ions.

The protein resides in the cytoplasm. The enzyme catalyses urea + 2 H2O + H(+) = hydrogencarbonate + 2 NH4(+). Its pathway is nitrogen metabolism; urea degradation; CO(2) and NH(3) from urea (urease route): step 1/1. In Pseudomonas fluorescens (strain Pf0-1), this protein is Urease subunit alpha.